We begin with the raw amino-acid sequence, 435 residues long: Monodictyphenone cluster transcription factor (435 aa).

The zn(2)-C6 fungal-type DNA-binding region spans 23–50 (CHACALSKLKCSQDKPTCSRCVKRGTAC). A disordered region spans residues 117 to 147 (QYHQRTPSYPESIPSLLSSTGPGTSATSPLT). A compositionally biased stretch (low complexity) spans 130 to 147 (PSLLSSTGPGTSATSPLT).

The protein resides in the nucleus. Functionally, transcription factor that regulates the expression of the gene cluster that mediates the biosynthesis of monodictyphenone, a prenyl xanthone derivative. This chain is Monodictyphenone cluster transcription factor, found in Emericella nidulans (strain FGSC A4 / ATCC 38163 / CBS 112.46 / NRRL 194 / M139) (Aspergillus nidulans).